Reading from the N-terminus, the 402-residue chain is Xylose/arabinose-binding protein XylF (402 aa).

A helical transmembrane segment spans residues 38 to 58; it reads GIIAGVLAAFGAGFGSGYVTA.

Belongs to the bacterial solute-binding protein 2 family. As to quaternary structure, the complex is composed of two ATP-binding proteins (XylG), two transmembrane proteins (XylH) and a solute-binding protein (XylF).

The protein resides in the cell membrane. In terms of biological role, part of the ABC transporter complex XylFGH involved in the uptake of xylose and arabinose. In Sulfolobus acidocaldarius (strain ATCC 33909 / DSM 639 / JCM 8929 / NBRC 15157 / NCIMB 11770), this protein is Xylose/arabinose-binding protein XylF.